The primary structure comprises 268 residues: Tryptophan synthase alpha chain (268 aa).

Active-site proton acceptor residues include Glu49 and Asp60.

Belongs to the TrpA family. As to quaternary structure, tetramer of two alpha and two beta chains.

It catalyses the reaction (1S,2R)-1-C-(indol-3-yl)glycerol 3-phosphate + L-serine = D-glyceraldehyde 3-phosphate + L-tryptophan + H2O. The protein operates within amino-acid biosynthesis; L-tryptophan biosynthesis; L-tryptophan from chorismate: step 5/5. The alpha subunit is responsible for the aldol cleavage of indoleglycerol phosphate to indole and glyceraldehyde 3-phosphate. The protein is Tryptophan synthase alpha chain of Escherichia coli O7:K1 (strain IAI39 / ExPEC).